A 230-amino-acid chain; its full sequence is Sugar fermentation stimulation protein homolog (230 aa).

Belongs to the SfsA family.

In Clostridium botulinum (strain 657 / Type Ba4), this protein is Sugar fermentation stimulation protein homolog.